Reading from the N-terminus, the 90-residue chain is Serine protease inhibitor kazal-like protein, minor form (90 aa).

The signal sequence occupies residues 1–23 (MSSTWIKFLFILTLVLLPYSVFS). Residues 33–89 (VIKEPNCTMYKSKSECSNIAENPVCADDRNTYYNECYFCIEKVVEKLKYRYHGICIY) form the Kazal-like domain. N-linked (GlcNAc...) asparagine glycosylation is present at asparagine 38.

In terms of tissue distribution, luminal fluid and mucosal folds of the seminal vesicles (at protein level). Not detected in brain, heart, lung, liver, kidney, stomach, small intestine, muscle, skin, thymus, placenta or bladder.

The protein resides in the secreted. Does not function as an inhibitor of trypsin, chymotrypsin, subtilisin or elastase. Binds sperm and enhances sperm motility. May act as a decapacitation factor, suppresses BSA-stimulated sperm capacitation and blocks sperm-oocyte interactions in vitro. The polypeptide is Serine protease inhibitor kazal-like protein, minor form (Spinkl) (Mus musculus (Mouse)).